The primary structure comprises 666 residues: Protein translocase subunit SecA 2 (666 aa).

Residues Q119, 137-141 (GEGKS), and D546 contribute to the ATP site.

Belongs to the SecA family. Monomer and homodimer. Part of the essential Sec protein translocation apparatus which comprises SecA, SecYEG and auxiliary proteins SecDF-YajC and YidC.

It localises to the cell inner membrane. It is found in the cytoplasm. The enzyme catalyses ATP + H2O + cellular proteinSide 1 = ADP + phosphate + cellular proteinSide 2.. In terms of biological role, part of the Sec protein translocase complex. Interacts with the SecYEG preprotein conducting channel. Has a central role in coupling the hydrolysis of ATP to the transfer of proteins into and across the cell membrane, serving both as a receptor for the preprotein-SecB complex and as an ATP-driven molecular motor driving the stepwise translocation of polypeptide chains across the membrane. This is Protein translocase subunit SecA 2 from Nitrosospira multiformis (strain ATCC 25196 / NCIMB 11849 / C 71).